A 243-amino-acid chain; its full sequence is Transcription factor TFIIS homolog (243 aa).

One can recognise a TFIIS central domain in the interval 77-201 (MRDIIQMMFF…SQQKVAEKTS (125 aa)). The TFIIS-type zinc-finger motif lies at 202 to 242 (QLYKCPNCKQRMCTYREVQTRALDEPSTIYCTCKKCGHEFI). Residues C206, C209, C234, and C237 each contribute to the Zn(2+) site.

Belongs to the TFS-II family.

Its function is as follows. Putative initiation factor. Necessary for efficient transcription elongation past template-encoded arresting sites. This African swine fever virus (isolate Pig/Kenya/KEN-50/1950) (ASFV) protein is Transcription factor TFIIS homolog.